The primary structure comprises 175 residues: NAD(P)H-quinone oxidoreductase subunit J (175 aa).

The protein belongs to the complex I 30 kDa subunit family. In terms of assembly, NDH-1 can be composed of about 15 different subunits; different subcomplexes with different compositions have been identified which probably have different functions.

The protein localises to the cellular thylakoid membrane. The enzyme catalyses a plastoquinone + NADH + (n+1) H(+)(in) = a plastoquinol + NAD(+) + n H(+)(out). It catalyses the reaction a plastoquinone + NADPH + (n+1) H(+)(in) = a plastoquinol + NADP(+) + n H(+)(out). In terms of biological role, NDH-1 shuttles electrons from an unknown electron donor, via FMN and iron-sulfur (Fe-S) centers, to quinones in the respiratory and/or the photosynthetic chain. The immediate electron acceptor for the enzyme in this species is believed to be plastoquinone. Couples the redox reaction to proton translocation, and thus conserves the redox energy in a proton gradient. Cyanobacterial NDH-1 also plays a role in inorganic carbon-concentration. This chain is NAD(P)H-quinone oxidoreductase subunit J, found in Trichormus variabilis (strain ATCC 29413 / PCC 7937) (Anabaena variabilis).